Here is a 298-residue protein sequence, read N- to C-terminus: NFU1 iron-sulfur cluster scaffold homolog, mitochondrial (298 aa).

Positions 190–258 (IKELLDTRIR…IPEVESVEQV (69 aa)) are nifU. [4Fe-4S] cluster-binding residues include cysteine 227 and cysteine 230. Over residues 279 to 288 (QKESVNQPNA) the composition is skewed to polar residues. Residues 279 to 298 (QKESVNQPNAPVNIGGGTPN) form a disordered region.

It belongs to the NifU family.

It localises to the mitochondrion. Its function is as follows. Molecular scaffold for [Fe-S] cluster assembly of mitochondrial iron-sulfur proteins. The chain is NFU1 iron-sulfur cluster scaffold homolog, mitochondrial from Drosophila virilis (Fruit fly).